Consider the following 105-residue polypeptide: MIHFKGLIFYHYSAGDDVAIHTQDMAWLEESDVVVAEVTQPSLGVGYEIGRAVAWKKRILCLYRPDDGKGLSAMVRGAHDGKNFIVKDYQEPEVPGILKEFLSSS.

The 5-hydroxymethyl-dUMP site is built by Gly6, Ile8, Ser42, Gly44, Glu48, and Ser72.

The protein belongs to the 2'-deoxynucleoside 5'-phosphate N-hydrolase 1 family. Monomer and homodimer.

It localises to the cytoplasm. The protein localises to the nucleus. It catalyses the reaction 5-hydroxymethyl-dUMP + H2O = 5-hydroxymethyluracil + 2-deoxy-D-ribose 5-phosphate. Functionally, part of a nucleotide salvage pathway that eliminates epigenetically modified 5-hydroxymethyl-dCMP (hmdCMP) in a two-step process entailing deamination to cytotoxic 5-hydroxymethyl-dUMP (hmdUMP), followed by its hydrolysis into 5-hydroxymethyluracil (hmU) and 2-deoxy-D-ribose 5-phosphate (deoxyribosephosphate). Catalyzes the second step in that pathway, the hydrolysis of the N-glycosidic bond in hmdUMP, degrading this cytotoxic nucleotide to avoid its genomic integration. The chain is 5-hydroxymethyl-dUMP N-hydrolase from Branchiostoma floridae (Florida lancelet).